The primary structure comprises 94 residues: Small ribosomal subunit protein eS24 (94 aa).

This sequence belongs to the eukaryotic ribosomal protein eS24 family.

The sequence is that of Small ribosomal subunit protein eS24 from Nanoarchaeum equitans (strain Kin4-M).